The chain runs to 115 residues: Guanylin (115 aa).

An N-terminal signal peptide occupies residues 1–21 (MNAFLLSALCLLGAWAALAGG). Intrachain disulfides connect C69-C82, C104-C112, and C107-C115.

This sequence belongs to the guanylin family. Highly expressed in ileum and colon. Found in plasma.

Its subcellular location is the secreted. Endogenous activator of intestinal guanylate cyclase. It stimulates this enzyme through the same receptor binding region as the heat-stable enterotoxins. In Homo sapiens (Human), this protein is Guanylin (GUCA2A).